Reading from the N-terminus, the 272-residue chain is HMP-PP phosphatase (272 aa).

The active-site Nucleophile is Asp8. Mg(2+) is bound by residues Asp8, Asp10, and Asp212.

This sequence belongs to the HAD-like hydrolase superfamily. Cof family. Mg(2+) serves as cofactor.

The catalysed reaction is 4-amino-2-methyl-5-(diphosphooxymethyl)pyrimidine + H2O = 4-amino-2-methyl-5-(phosphooxymethyl)pyrimidine + phosphate + H(+). Functionally, catalyzes the hydrolysis of 4-amino-2-methyl-5-hydroxymethylpyrimidine pyrophosphate (HMP-PP) to 4-amino-2-methyl-5-hydroxymethylpyrimidine phosphate (HMP-P). This is HMP-PP phosphatase from Citrobacter koseri (strain ATCC BAA-895 / CDC 4225-83 / SGSC4696).